A 348-amino-acid chain; its full sequence is GTP 3',8-cyclase (348 aa).

A Radical SAM core domain is found at 24–242; it reads PFGRAVTYLR…EKQFTLTDID (219 aa). Arg33 is a binding site for GTP. [4Fe-4S] cluster-binding residues include Cys40 and Cys44. Tyr46 serves as a coordination point for S-adenosyl-L-methionine. Cys47 provides a ligand contact to [4Fe-4S] cluster. Arg82 lines the GTP pocket. Residue Gly86 participates in S-adenosyl-L-methionine binding. Thr115 is a GTP binding site. Ser139 provides a ligand contact to S-adenosyl-L-methionine. Lys175 provides a ligand contact to GTP. Met209 is a binding site for S-adenosyl-L-methionine. [4Fe-4S] cluster-binding residues include Cys272 and Cys275. A GTP-binding site is contributed by 277–279; sequence RVR. Position 289 (Cys289) interacts with [4Fe-4S] cluster.

This sequence belongs to the radical SAM superfamily. MoaA family. In terms of assembly, monomer and homodimer. [4Fe-4S] cluster serves as cofactor.

It carries out the reaction GTP + AH2 + S-adenosyl-L-methionine = (8S)-3',8-cyclo-7,8-dihydroguanosine 5'-triphosphate + 5'-deoxyadenosine + L-methionine + A + H(+). It functions in the pathway cofactor biosynthesis; molybdopterin biosynthesis. Catalyzes the cyclization of GTP to (8S)-3',8-cyclo-7,8-dihydroguanosine 5'-triphosphate. In Rhizobium leguminosarum bv. trifolii (strain WSM2304), this protein is GTP 3',8-cyclase.